Reading from the N-terminus, the 137-residue chain is Methylglyoxal synthase (137 aa).

One can recognise an MGS-like domain in the interval 1–137; the sequence is MNIALVAHDQ…EVRKSKSQRI (137 aa). Residues His8, Lys12, 34 to 37, and 54 to 55 contribute to the substrate site; these read TGTT and SG. Residue Asp60 is the Proton donor/acceptor of the active site. Residue His87 participates in substrate binding.

Belongs to the methylglyoxal synthase family.

It carries out the reaction dihydroxyacetone phosphate = methylglyoxal + phosphate. Its function is as follows. Catalyzes the formation of methylglyoxal from dihydroxyacetone phosphate. This chain is Methylglyoxal synthase, found in Clostridioides difficile (strain 630) (Peptoclostridium difficile).